The sequence spans 362 residues: Ferrochelatase (362 aa).

Positions 228 and 309 each coordinate Fe cation.

This sequence belongs to the ferrochelatase family.

It is found in the cytoplasm. It catalyses the reaction heme b + 2 H(+) = protoporphyrin IX + Fe(2+). It participates in porphyrin-containing compound metabolism; protoheme biosynthesis; protoheme from protoporphyrin-IX: step 1/1. Catalyzes the ferrous insertion into protoporphyrin IX. The chain is Ferrochelatase from Bordetella parapertussis (strain 12822 / ATCC BAA-587 / NCTC 13253).